Here is a 136-residue protein sequence, read N- to C-terminus: Protein NrdI (136 aa).

Belongs to the NrdI family.

Functionally, probably involved in ribonucleotide reductase function. The chain is Protein NrdI from Escherichia coli O1:K1 / APEC.